The primary structure comprises 361 residues: UPF0283 membrane protein mlr0776 (361 aa).

The disordered stretch occupies residues 1–33 (MTAPRKPAAFRIEPEAAPTQETPKARQAELSRK). Residues 23 to 32 (PKARQAELSR) are compositionally biased toward basic and acidic residues. 2 helical membrane passes run 73 to 93 (LFGS…VGLW) and 108 to 128 (LGWL…VILI).

Belongs to the UPF0283 family.

It localises to the cell inner membrane. The chain is UPF0283 membrane protein mlr0776 from Mesorhizobium japonicum (strain LMG 29417 / CECT 9101 / MAFF 303099) (Mesorhizobium loti (strain MAFF 303099)).